The primary structure comprises 300 residues: NAD kinase (300 aa).

Asp75 (proton acceptor) is an active-site residue. NAD(+) is bound by residues Asp75–Gly76, Asn149–Asp150, Arg177, Asp179, Thr190–Ser195, Ala214, and Gln248.

This sequence belongs to the NAD kinase family. A divalent metal cation is required as a cofactor.

It localises to the cytoplasm. The catalysed reaction is NAD(+) + ATP = ADP + NADP(+) + H(+). Involved in the regulation of the intracellular balance of NAD and NADP, and is a key enzyme in the biosynthesis of NADP. Catalyzes specifically the phosphorylation on 2'-hydroxyl of the adenosine moiety of NAD to yield NADP. The polypeptide is NAD kinase (Burkholderia lata (strain ATCC 17760 / DSM 23089 / LMG 22485 / NCIMB 9086 / R18194 / 383)).